The sequence spans 356 residues: Protein RecA (356 aa).

68–75 (GQESSGKT) is a binding site for ATP.

Belongs to the RecA family.

The protein localises to the cytoplasm. Can catalyze the hydrolysis of ATP in the presence of single-stranded DNA, the ATP-dependent uptake of single-stranded DNA by duplex DNA, and the ATP-dependent hybridization of homologous single-stranded DNAs. It interacts with LexA causing its activation and leading to its autocatalytic cleavage. This is Protein RecA from Thermotoga maritima (strain ATCC 43589 / DSM 3109 / JCM 10099 / NBRC 100826 / MSB8).